An 87-amino-acid polypeptide reads, in one-letter code: Small ribosomal subunit protein bS20 (87 aa).

The protein belongs to the bacterial ribosomal protein bS20 family.

In terms of biological role, binds directly to 16S ribosomal RNA. The chain is Small ribosomal subunit protein bS20 from Clostridium perfringens (strain 13 / Type A).